Reading from the N-terminus, the 167-residue chain is Large ribosomal subunit protein bL9 (167 aa).

It belongs to the bacterial ribosomal protein bL9 family.

Binds to the 23S rRNA. This is Large ribosomal subunit protein bL9 from Nitratidesulfovibrio vulgaris (strain ATCC 29579 / DSM 644 / CCUG 34227 / NCIMB 8303 / VKM B-1760 / Hildenborough) (Desulfovibrio vulgaris).